Consider the following 465-residue polypeptide: Mothers against decapentaplegic homolog 1 (465 aa).

An N-acetylmethionine modification is found at Met1. The MH1 domain maps to 12–136; the sequence is PAVKRLLGWK…YKRVESPVLP (125 aa). Residues Cys64, Cys109, Cys121, and His126 each contribute to the Zn(2+) site. The segment at 162-249 is disordered; sequence NEPHMPLNAT…QPMDTNMMAP (88 aa). Low complexity predominate over residues 179–210; it reads PNSHPFPHSPNSSYPNSPGSSSSTYPHSPTSS. Positions 221 to 232 are enriched in pro residues; sequence DTPPPAYLPPED. One can recognise an MH2 domain in the interval 271 to 465; sequence WCSIVYYELN…SPHNPISSVS (195 aa). A Phosphothreonine; by MINK1, TNIK and MAP4K4 modification is found at Thr322. Residues 418–428 are L3 loop; it reads KGWGAEYHRQD. Phosphoserine is present on residues Ser463 and Ser465.

This sequence belongs to the dwarfin/SMAD family. As to quaternary structure, found in a complex with SMAD4 and YY1. Interacts with HGS, NANOG and ZCCHC12. Upon C-terminus phosphorylation: forms trimers with another SMAD1 and the co-SMAD SMAD4. Interacts with PEBP2-alpha subunit, CREB-binding protein (CBP), p300, SMURF1, SMURF2, USP15 and HOXC8. Associates with ZNF423 or ZNF521 in response to BMP2 leading to activate transcription of BMP target genes. Interacts with SKOR1. Interacts (via MH2 domain) with LEMD3. Binding to LEMD3 results in at least a partial reduction of receptor-mediated phosphorylation. Forms a ternary complex with PSMB4 and OAZ1 before PSMB4 is incorporated into the 20S proteasome. Interacts (via MH2 domain) with FAM83G (via MH2 domain); in a SMAD4-independent manner. Interacts with ZC3H3. Interacts with TMEM119. Interacts (via MH1 and MH2 domains) with ZNF8. Interacts with RANBP3L; the interaction increases when SMAD1 is not phosphorylated and mediates SMAD1 nuclear export. Interacts with EGR1; this interaction inhibits SMAD1 dephosphorylation. Interacts with SMAD6. Interacts with YAP1. Interacts with MTMR4; negatively regulates BMP signaling through SMAD1 dephosphorylation and retention in endosomes. In terms of processing, phosphorylation of the C-terminal SVS motif by BMP type 1 receptor kinase activates SMAD1 by promoting dissociation from the receptor and trimerization with SMAD4. Phosphorylation by ERK2 MAP kinase in response to EGF or HGF prevents SMAD1 nuclear accumulation and transcriptional activity in response to BMP. Dephosphorylation, probably by PPM1A, induces its export from the nucleus to the cytoplasm. Dephosphorylation is inhibited by association with EGR1. Phosphorylation by CDK8/9 creates binding sites for YAP1, and subsequent phosphorylation by GSK3 switches off YAP1 binding and adds binding sites for SMURF1. Ubiquitinated by SMAD-specific E3 ubiquitin ligase SMURF1, leading to its degradation. Monoubiquitinated, leading to prevent DNA-binding. Deubiquitination by USP15 alleviates inhibition and promotes activation of TGF-beta target genes. Dephosphorylation, probably by PPM1A, induces its export from the nucleus to the cytoplasm. Phospho-SMAD1 is ubiquitinated by CHIP leading to disruption of the SMAD1-SMAD4 complex.

Its subcellular location is the cytoplasm. It localises to the nucleus. Functionally, transcriptional modulator that plays a role in various cellular processes, including embryonic development, cell differentiation, and tissue homeostasis. Upon BMP ligand binding to their receptors at the cell surface, is phosphorylated by activated type I BMP receptors (BMPRIs) and associates with SMAD4 to form an heteromeric complex which translocates into the nucleus acting as transcription factor. In turn, the hetero-trimeric complex recognizes cis-regulatory elements containing Smad Binding Elements (SBEs) to modulate the outcome of the signaling network. SMAD1/OAZ1/PSMB4 complex mediates the degradation of the CREBBP/EP300 repressor SNIP1. Positively regulates BMP4-induced expression of odontogenic development regulator MSX1 following IPO7-mediated nuclear import. This is Mothers against decapentaplegic homolog 1 (SMAD1) from Bos taurus (Bovine).